A 327-amino-acid polypeptide reads, in one-letter code: Vacuolar protein sorting-associated protein 26A (327 aa).

Positions 306–327 (RTNFHQRFESPDSQASAEQPEM) are disordered. The residue at position 315 (serine 315) is a Phosphoserine. Polar residues predominate over residues 316–327 (PDSQASAEQPEM).

Belongs to the VPS26 family. In terms of assembly, component of the heterotrimeric retromer cargo-selective complex (CSC), also described as vacuolar protein sorting subcomplex (VPS), formed by VPS26 (VPS26A or VPS26B), VPS29 and VPS35. The CSC has a highly elongated structure with VPS26 and VPS29 binding independently at opposite distal ends of VPS35 as central platform. The CSC is believed to associate with variable sorting nexins to form functionally distinct retromer complex variants. The originally described retromer complex (also called SNX-BAR retromer) is a pentamer containing the CSC and a heterodimeric membrane-deforming subcomplex formed between SNX1 or SNX2 and SNX5 or SNX6 (also called SNX-BAR subcomplex); the respective CSC and SNX-BAR subcomplexes associate with low affinity. The CSC associates with SNX3 to form a SNX3-retromer complex. The CSC associates with SNX27, the WASH complex and the SNX-BAR subcomplex to form the SNX27-retromer complex. Interacts with VPS29, VPS35, SNX27. Interacts with SNX1, SNX2, SNX5, SNX6, SNX3, RAB7A, ECPAS, EHD1, WASHC5, SORL1.

The protein resides in the cytoplasm. The protein localises to the endosome membrane. Its subcellular location is the early endosome. In terms of biological role, acts as a component of the retromer cargo-selective complex (CSC). The CSC is believed to be the core functional component of retromer or respective retromer complex variants acting to prevent missorting of selected transmembrane cargo proteins into the lysosomal degradation pathway. The recruitment of the CSC to the endosomal membrane involves RAB7A and SNX3. The SNX-BAR retromer mediates retrograde transport of cargo proteins from endosomes to the trans-Golgi network (TGN) and is involved in endosome-to-plasma membrane transport for cargo protein recycling. The SNX3-retromer mediates the retrograde endosome-to-TGN transport of WLS distinct from the SNX-BAR retromer pathway. The SNX27-retromer is believed to be involved in endosome-to-plasma membrane trafficking and recycling of a broad spectrum of cargo proteins. The CSC complex seems to act as recruitment hub for other proteins, such as the WASH complex and TBC1D5. Required for retrograde transport of lysosomal enzyme receptor IGF2R. Required to regulate transcytosis of the polymeric immunoglobulin receptor (pIgR-pIgA). Required for the endosomal localization of WASHC2 (indicative for the WASH complex). Required for the endosomal localization of TBC1D5. Mediates retromer cargo recognition of SORL1 and is involved in trafficking of SORL1 implicated in sorting and processing of APP. Involved in retromer-independent lysosomal sorting of F2R. Involved in recycling of ADRB2. Acts redundantly with VSP26B in SNX-27 mediated endocytic recycling of SLC2A1/GLUT1. Enhances the affinity of SNX27 for PDZ-binding motifs in cargo proteins. The protein is Vacuolar protein sorting-associated protein 26A (Vps26a) of Mus musculus (Mouse).